We begin with the raw amino-acid sequence, 165 residues long: uncharacterized protein (165 aa).

The next 2 membrane-spanning stretches (helical) occupy residues 7–27 and 141–161; these read LWLA…QITV and KGTP…IALL.

The protein localises to the cell membrane. This is an uncharacterized protein from Archaeoglobus fulgidus (strain ATCC 49558 / DSM 4304 / JCM 9628 / NBRC 100126 / VC-16).